The sequence spans 171 residues: Co-chaperone protein HscB (171 aa).

Residues 2–74 (DYFTLFGLPA…LTRAEYLLSL (73 aa)) form the J domain.

It belongs to the HscB family. As to quaternary structure, interacts with HscA and stimulates its ATPase activity. Interacts with IscU.

In terms of biological role, co-chaperone involved in the maturation of iron-sulfur cluster-containing proteins. Seems to help targeting proteins to be folded toward HscA. In Salmonella choleraesuis (strain SC-B67), this protein is Co-chaperone protein HscB.